Here is a 1343-residue protein sequence, read N- to C-terminus: DNA-directed RNA polymerase subunit beta (1343 aa).

This sequence belongs to the RNA polymerase beta chain family. The RNAP catalytic core consists of 2 alpha, 1 beta, 1 beta' and 1 omega subunit. When a sigma factor is associated with the core the holoenzyme is formed, which can initiate transcription.

The catalysed reaction is RNA(n) + a ribonucleoside 5'-triphosphate = RNA(n+1) + diphosphate. Its function is as follows. DNA-dependent RNA polymerase catalyzes the transcription of DNA into RNA using the four ribonucleoside triphosphates as substrates. This is DNA-directed RNA polymerase subunit beta from Shewanella loihica (strain ATCC BAA-1088 / PV-4).